The sequence spans 312 residues: Taste receptor type 2 member 9 (312 aa).

Residues 1-9 (MPSAIEAIY) lie on the Extracellular side of the membrane. Residues 10–32 (IILIAGELTIGIWGNGFIVLVNC) form a helical membrane-spanning segment. Topologically, residues 33–52 (IDWLKRRDVSLIDIILISLA) are cytoplasmic. The chain crosses the membrane as a helical span at residues 53–72 (ISRICLLXVISLDGFFMLLF). Topologically, residues 73-86 (PTTYGNSVLVSIVB) are extracellular. The chain crosses the membrane as a helical span at residues 87 to 109 (IVWTFANNSSLWFTSCLSIFYLL). Over 110 to 128 (KIANISHPFFFWLKLKINK) the chain is Cytoplasmic. A helical transmembrane segment spans residues 129 to 146 (VILAILLGSFLISLVISV). Residues 147–180 (XMNDDMWYHLFKVSHEENITWEFKVSKIPGTFKQ) are Extracellular-facing. An N-linked (GlcNAc...) asparagine glycan is attached at Asn-164. A helical transmembrane segment spans residues 181 to 203 (LTLNLGAMVPFILCLISFSLLLF). Residues 204-234 (SLVRHTKQIQLXATGFRDPSTEAHMRAIKAV) are Cytoplasmic-facing. A helical membrane pass occupies residues 235-257 (IIFLLLLIVYYPVFLVMTSSALI). Residues 258–261 (PQGK) lie on the Extracellular side of the membrane. The chain crosses the membrane as a helical span at residues 262-284 (LVLMIGDIVTITFPSSHSFILIM). The Cytoplasmic portion of the chain corresponds to 285 to 312 (GNSKLREAFLKMLRFVKRFLRRRKPFVP).

The protein belongs to the G-protein coupled receptor T2R family.

The protein resides in the membrane. Its function is as follows. Gustducin-coupled receptor implicated in the perception of bitter compounds in the oral cavity and the gastrointestinal tract. Signals through PLCB2 and the calcium-regulated cation channel TRPM5. The chain is Taste receptor type 2 member 9 (TAS2R9) from Pongo pygmaeus (Bornean orangutan).